We begin with the raw amino-acid sequence, 326 residues long: Probable iron chelatin transport system permease protein jhp_0822 (326 aa).

The next 10 membrane-spanning stretches (helical) occupy residues 7-27 (IALA…ESLS), 64-84 (ILAL…QTIL), 91-111 (PFLL…IAVV), 113-133 (SNIA…VLAM), 142-162 (LSLV…AGAI), 164-184 (FFVI…SLSL), 187-207 (YKDC…LFLL), 241-261 (VASA…LVIP), 275-295 (LLLS…VVAK), and 301-321 (DLPV…WLLF).

Belongs to the binding-protein-dependent transport system permease family. FecCD subfamily.

The protein resides in the cell inner membrane. Functionally, part of a binding-protein-dependent transport system for an iron chelatin; probably responsible for the translocation of the substrate across the membrane. This is Probable iron chelatin transport system permease protein jhp_0822 from Helicobacter pylori (strain J99 / ATCC 700824) (Campylobacter pylori J99).